A 122-amino-acid chain; its full sequence is Large ribosomal subunit protein uL14 (122 aa).

This sequence belongs to the universal ribosomal protein uL14 family. Part of the 50S ribosomal subunit. Forms a cluster with proteins L3 and L19. In the 70S ribosome, L14 and L19 interact and together make contacts with the 16S rRNA in bridges B5 and B8.

In terms of biological role, binds to 23S rRNA. Forms part of two intersubunit bridges in the 70S ribosome. The polypeptide is Large ribosomal subunit protein uL14 (Rickettsia canadensis (strain McKiel)).